An 853-amino-acid chain; its full sequence is Guanine nucleotide exchange protein smcr8a (853 aa).

Residues 47 to 219 (TSYAKFSKDF…KETELQKMNN (173 aa)) form the uDENN FLCN/SMCR8-type domain. Disordered regions lie at residues 272 to 298 (PVMD…SRKS) and 418 to 454 (LKPG…SFSS). Positions 280–298 (DTNPSDSAENTVETESRKS) are enriched in polar residues. A cDENN FLCN/SMCR8-type domain is found at 316 to 753 (RLKTLEELCD…LISHLADHRT (438 aa)). Over residues 421-432 (GVESGEGPPESS) the composition is skewed to low complexity. Positions 433 to 454 (TSDITQETSEAADTETKGSFSS) are enriched in polar residues. The dDENN FLCN/SMCR8-type domain occupies 762–826 (FLHIQGMLTQ…IIQYLSELIK (65 aa)).

The protein belongs to the SMCR8 family. Component of the C9orf72-SMCR8 complex. The C9orf72-SMCR8 complex associates with the ATG1/ULK1 kinase complex.

It is found in the cytoplasm. Its subcellular location is the nucleus. In terms of biological role, component of the C9orf72-SMCR8 complex, a complex that has guanine nucleotide exchange factor (GEF) activity and regulates autophagy. In the complex, C9orf72 and SMCR8 probably constitute the catalytic subunits that promote the exchange of GDP to GTP, converting inactive GDP-bound RAB8A and RAB39B into their active GTP-bound form, thereby promoting autophagosome maturation. The C9orf72-SMCR8 complex also acts as a negative regulator of autophagy initiation by interacting with the ATG1/ULK1 kinase complex and inhibiting its protein kinase activity. The chain is Guanine nucleotide exchange protein smcr8a (smcr8a) from Danio rerio (Zebrafish).